A 210-amino-acid polypeptide reads, in one-letter code: HTH-type transcriptional regulator TtgR (210 aa).

Residues 10–70 (QETRAQIIEA…ALLDSLHETH (61 aa)) form the HTH tetR-type domain. The segment at residues 33–52 (TLADIAELAGVTRGAIYWHF) is a DNA-binding region (H-T-H motif).

In terms of assembly, homodimer.

Represses expression from the ttgABC operon promoter and its own expression. Binds to a promoter region between the divergently transcribed ttgR and ttgABC genes/operons; in the presence of chloramphenicol or tetracycline this binding no longer occurs and ttgR and ttgABC are derepressed. This suggests that TtgR binds these antibiotics. This Pseudomonas putida (strain DOT-T1E) protein is HTH-type transcriptional regulator TtgR (ttgR).